Here is an 805-residue protein sequence, read N- to C-terminus: Ubiquitin carboxyl-terminal hydrolase 10-B (805 aa).

2 disordered regions span residues 136 to 173 (AIPDGSGNADSDGTSGTGQRERKKKKKRPPGYYSYLEG) and 284 to 305 (DTTENLGVTNGQTLESPEEDTV). 2 stretches are compositionally biased toward polar residues: residues 143 to 153 (NADSDGTSGTG) and 284 to 298 (DTTENLGVTNGQTLE). Residues 422 to 802 (RGLINKGNWC…TAYLLYYRRV (381 aa)) enclose the USP domain. Residue Cys-431 is the Nucleophile of the active site. Residues 573–600 (EEVNKEEQEGSDEEWEQVGPRNKSSVTR) are disordered. His-756 serves as the catalytic Proton acceptor.

It belongs to the peptidase C19 family. USP10 subfamily.

It is found in the cytoplasm. Its subcellular location is the nucleus. It carries out the reaction Thiol-dependent hydrolysis of ester, thioester, amide, peptide and isopeptide bonds formed by the C-terminal Gly of ubiquitin (a 76-residue protein attached to proteins as an intracellular targeting signal).. Its function is as follows. Hydrolase that can remove conjugated ubiquitin from target proteins such as p53/tp53, rps2/us5, rps3/us3, rps10/eS10, becn1, snx3 and cftr. Acts as an essential regulator of p53/tp53 stability: in unstressed cells, specifically deubiquitinates p53/tp53 in the cytoplasm, leading to counteracts MDM2 action and stabilize p53/tp53. Following DNA damage, translocates to the nucleus and deubiquitinates p53/tp53, leading to regulate the p53/TP53-dependent DNA damage response. Component of a regulatory loop that controls autophagy and p53/tp53 levels. Plays a key role in 40S ribosome subunit recycling when a ribosome has stalled during translation: acts both by inhibiting formation of stress granules, which store stalled translation pre-initiation complexes, and mediating deubiquitination of 40S ribosome subunits. Deubiquitinates cftr in early endosomes, enhancing its endocytic recycling. The chain is Ubiquitin carboxyl-terminal hydrolase 10-B (usp10-b) from Xenopus laevis (African clawed frog).